Consider the following 105-residue polypeptide: Met repressor (105 aa).

This sequence belongs to the MetJ family. As to quaternary structure, homodimer.

It is found in the cytoplasm. Its function is as follows. This regulatory protein, when combined with SAM (S-adenosylmethionine) represses the expression of the methionine regulon and of enzymes involved in SAM synthesis. The polypeptide is Met repressor (Glaesserella parasuis serovar 5 (strain SH0165) (Haemophilus parasuis)).